The sequence spans 183 residues: MQHNKIKVAFLDRDGVINKEVNYLHKIEDFEYTSKCIVGLKKIRDLGYEIIIITNQAGIARGYYSEKQYQLLTDWYRNDLKEKGVDILDIFHCPHYPDGIVPELSKDCYCRKPSPGMIEQARKKYSIDIKSSILVGDKNSDIHAGERAGIPRCFLVKTGHPTSEPTENAILSNNLFTISKLIE.

4 residues coordinate Zn(2+): cysteine 93, histidine 95, cysteine 108, and cysteine 110.

Belongs to the GmhB family.

The protein localises to the cytoplasm. It carries out the reaction D-glycero-alpha-D-manno-heptose 1,7-bisphosphate + H2O = D-glycero-alpha-D-manno-heptose 1-phosphate + phosphate. It participates in nucleotide-sugar biosynthesis; GDP-D-glycero-alpha-D-manno-heptose biosynthesis; GDP-D-glycero-alpha-D-manno-heptose from D-glycero-alpha-D-manno-heptose 7-phosphate: step 2/3. In terms of biological role, converts the D-glycero-alpha-D-manno-heptose 1,7-bisphosphate intermediate into D-glycero-alpha-D-manno-heptose 1-phosphate by removing the phosphate group at the C-7 position. In Photorhabdus laumondii subsp. laumondii (strain DSM 15139 / CIP 105565 / TT01) (Photorhabdus luminescens subsp. laumondii), this protein is D-glycero-alpha-D-manno-heptose-1,7-bisphosphate 7-phosphatase (gmhB2).